The primary structure comprises 518 residues: Cytochrome P450 3A27 (518 aa).

Position 447 (cysteine 447) interacts with heme.

The protein belongs to the cytochrome P450 family. It depends on heme as a cofactor.

The protein resides in the endoplasmic reticulum membrane. It is found in the microsome membrane. It catalyses the reaction an organic molecule + reduced [NADPH--hemoprotein reductase] + O2 = an alcohol + oxidized [NADPH--hemoprotein reductase] + H2O + H(+). Cytochromes P450 are a group of heme-thiolate monooxygenases. In liver microsomes, this enzyme is involved in an NADPH-dependent electron transport pathway. It oxidizes a variety of structurally unrelated compounds, including steroids, fatty acids, and xenobiotics. The polypeptide is Cytochrome P450 3A27 (cyp3a27) (Oncorhynchus mykiss (Rainbow trout)).